Reading from the N-terminus, the 186-residue chain is Peptidyl-tRNA hydrolase (186 aa).

TRNA is bound at residue tyrosine 14. The active-site Proton acceptor is histidine 19. Positions 64, 66, and 112 each coordinate tRNA.

It belongs to the PTH family. In terms of assembly, monomer.

Its subcellular location is the cytoplasm. It catalyses the reaction an N-acyl-L-alpha-aminoacyl-tRNA + H2O = an N-acyl-L-amino acid + a tRNA + H(+). In terms of biological role, hydrolyzes ribosome-free peptidyl-tRNAs (with 1 or more amino acids incorporated), which drop off the ribosome during protein synthesis, or as a result of ribosome stalling. Its function is as follows. Catalyzes the release of premature peptidyl moieties from peptidyl-tRNA molecules trapped in stalled 50S ribosomal subunits, and thus maintains levels of free tRNAs and 50S ribosomes. This Bacillus cereus (strain Q1) protein is Peptidyl-tRNA hydrolase.